An 82-amino-acid chain; its full sequence is DNA-directed RNA polymerase subunit omega (82 aa).

Belongs to the RNA polymerase subunit omega family. In terms of assembly, the RNAP catalytic core consists of 2 alpha, 1 beta, 1 beta' and 1 omega subunit. When a sigma factor is associated with the core the holoenzyme is formed, which can initiate transcription.

It catalyses the reaction RNA(n) + a ribonucleoside 5'-triphosphate = RNA(n+1) + diphosphate. Promotes RNA polymerase assembly. Latches the N- and C-terminal regions of the beta' subunit thereby facilitating its interaction with the beta and alpha subunits. The chain is DNA-directed RNA polymerase subunit omega from Lachnoclostridium phytofermentans (strain ATCC 700394 / DSM 18823 / ISDg) (Clostridium phytofermentans).